Reading from the N-terminus, the 383-residue chain is MGPLFTTIPGAHSGPMRPLPKKHVEPMAVRQLLLGNSTMIRHTCPMSVPLSRQVKEVAAQKPSEDIYKNWQQQQQQQQQQQQQQLDLLFHQRIQISLWPRKQKRRKTEQHSHPFVKKAFRFSAGSGCGRPSSNKMLRSMGGGQRPTGLGSEFFRLLHDLHLLAFAMKRIWIHRRGEATARPRAPEHPAPPATAVRGRDAASQNLKRRPGSGTDGLRLQGAEPSRLLRTYAGGAVIPTGTPERAQPPPPQDPLGRRRWLSRNTWGPWPGTTQPPSPQLLRNDWGSCGFMVPEAARGKVFQDSQEGAHIRRETVSKSVCAEPWRHQRARDPAPTNFPLRCQKQRGASASSGQHEGRVNLVFFIGSPTVIAVPDLQCPTKYSGMLY.

Disordered stretches follow at residues 1-21 (MGPL…PLPK) and 177-254 (ATAR…PLGR).

This sequence belongs to the FAM157 family.

This is Putative protein FAM157A (FAM157A) from Homo sapiens (Human).